Consider the following 597-residue polypeptide: MFS-type transporter FPY5 (597 aa).

Residues 1-55 (MSETTGLPLKHLQGSPPGTPVNTNNESNEASPDDGCRLPDTVTEAEASSDNHGSV) are disordered. Composition is skewed to polar residues over residues 20 to 30 (PVNTNNESNEA) and 46 to 55 (EASSDNHGSV). Asn-25 carries an N-linked (GlcNAc...) asparagine glycan. Asn-72 carries N-linked (GlcNAc...) asparagine glycosylation. 9 helical membrane passes run 94–114 (LSLL…VSIV), 120–140 (FNMA…FLII), 147–167 (IFGC…FSMA), 183–203 (FQGM…PLMV), 214–234 (IMSS…GAIT), 241–261 (WVFY…AFSV), 286–306 (VDFV…FALE), 316–336 (SGAI…FIAW), and 360–380 (FVMG…AALI). Residue Asn-390 is glycosylated (N-linked (GlcNAc...) asparagine). A run of 5 helical transmembrane segments spans residues 402-422 (LPLL…VSKL), 424-444 (VPPL…VGLY), 463-483 (IMGL…PLVV), 498-518 (IRVL…INHI), and 562-582 (EQMR…VLLV).

The protein belongs to the major facilitator superfamily. TCR/Tet family.

It is found in the membrane. It participates in secondary metabolite biosynthesis. In terms of biological role, MFS-type transporter; part of the gene cluster that mediates the biosynthesis of the gamma-pyrones fusapyrone (FPY) and deoxyfusapyrone (dFPY). The polypeptide is MFS-type transporter FPY5 (Fusarium mangiferae (Mango malformation disease fungus)).